The following is a 355-amino-acid chain: Guanine nucleotide-binding protein G(i) subunit alpha-2 (355 aa).

The N-myristoyl glycine moiety is linked to residue Gly2. Cys3 carries the S-palmitoyl cysteine lipid modification. A G-alpha domain is found at 32 to 355 (REVKLLLLGA…KNNLKDCGLF (324 aa)). The interval 35-48 (KLLLLGAGESGKST) is G1 motif. GTP-binding positions include 40 to 47 (GAGESGKS), 176 to 182 (LRTRVKT), 201 to 205 (DVGGQ), 270 to 273 (NKKD), and Ala327. Ser47 and Thr182 together coordinate Mg(2+). A G2 motif region spans residues 174–182 (DVLRTRVKT). The interval 197-206 (FKMFDVGGQR) is G3 motif. The G4 motif stretch occupies residues 266–273 (ILFLNKKD). The tract at residues 325-330 (TCATDT) is G5 motif.

This sequence belongs to the G-alpha family. G(i/o/t/z) subfamily. G proteins are composed of 3 units; alpha, beta and gamma. The alpha chain contains the guanine nucleotide binding site.

It localises to the cytoplasm. The protein localises to the cytoskeleton. It is found in the microtubule organizing center. The protein resides in the centrosome. Its subcellular location is the cell membrane. Its function is as follows. Guanine nucleotide-binding proteins (G proteins) are involved as modulators or transducers in various transmembrane signaling systems. The G(i) proteins are involved in hormonal regulation of adenylate cyclase: they inhibit the cyclase in response to beta-adrenergic stimuli. May play a role in cell division. This Oryzias latipes (Japanese rice fish) protein is Guanine nucleotide-binding protein G(i) subunit alpha-2 (gnai2).